The sequence spans 459 residues: ATP-dependent 6-phosphofructokinase (459 aa).

Residues Gly89, 154–155 (RG), and 179–182 (GDGG) contribute to the ATP site. Asp180 lines the Mg(2+) pocket. Residues 208 to 210 (TID), 253 to 255 (MGR), Glu309, and 368 to 371 (YAIR) each bind substrate. The Proton acceptor role is filled by Asp210.

Belongs to the phosphofructokinase type A (PFKA) family. PPi-dependent PFK group II subfamily. Atypical ATP-dependent clade 'X' sub-subfamily. As to quaternary structure, homodimer. Mg(2+) serves as cofactor.

It localises to the cytoplasm. It carries out the reaction beta-D-fructose 6-phosphate + ATP = beta-D-fructose 1,6-bisphosphate + ADP + H(+). Its pathway is carbohydrate degradation; glycolysis; D-glyceraldehyde 3-phosphate and glycerone phosphate from D-glucose: step 3/4. AMP causes 20-40% inhibition and diphosphate causes 20-50% inhibition. ADP, citrate, PEP and FBP have no effect. In terms of biological role, catalyzes the phosphorylation of D-fructose 6-phosphate to fructose 1,6-bisphosphate by ATP, the first committing step of glycolysis. This chain is ATP-dependent 6-phosphofructokinase, found in Amycolatopsis methanolica.